Here is a 118-residue protein sequence, read N- to C-terminus: MARVKRGVVARARHKKILKQAKGYYGARSRVYRVAVQAVTKAGQYAYRDRRQRKRQFRQLWITRINAAAREHGLSYSCLINGLKKAFIDIDRKMLADIAVFDKPSFAALAKKAKEALL.

This sequence belongs to the bacterial ribosomal protein bL20 family.

Functionally, binds directly to 23S ribosomal RNA and is necessary for the in vitro assembly process of the 50S ribosomal subunit. It is not involved in the protein synthesizing functions of that subunit. The sequence is that of Large ribosomal subunit protein bL20 from Hamiltonella defensa subsp. Acyrthosiphon pisum (strain 5AT).